A 450-amino-acid chain; its full sequence is MTTRYRVEFASSRPTGKFFTARLNGQTNIFQIEWIKGLLAVPFVLHSQPTAVYQEHSENLVAVAADTHQRYAEIFRDVEKLIDDHSRPLAPPPPPVLASHLTLSVDHERNAAPGKSKLKLLVPTAGSFFSRLPLEDAFKYQDAKRMISRRRFVAPSFNDIRLTLNTAQLLGLVRGPGLDLVTFDGDVTLYDDGACLTPDNPAIPRIIRLLHQGVRIGIVTAAGYTEGAKYYERLKGLLDAVHDSSSLTPAQKDGLVVMGGESNFLFRFDSASPHRLSYVPRPEWLLDEMKSWNQEDITQLLDIAESSLRACAANLNLPVAVLRKDRAVGVYPYDRSKIHREQLEETVLVVQNTVERSVVGSRLPFCAFNGGNDVFVDIGDKSWGVRACQRYFGGIEPSRTLHVGDQFLSAGANDFKARLASTTAWIASLTETVQLLDELEEMQKAEKNRS.

Position 144 (Lys-144) interacts with ATP. Asp-184 (nucleophile) is an active-site residue. Positions 184, 186, 192, 220, 373, and 381 each coordinate IMP. Residues Asp-184 and Asp-186 each contribute to the Mg(2+) site. The active-site Proton donor is Asp-186. Asp-405 serves as a coordination point for Mg(2+).

It belongs to the ISN1 family. Homotetramer. Requires Mg(2+) as cofactor.

It catalyses the reaction IMP + H2O = inosine + phosphate. Allosterically activated by ATP. ATP binding is a prerequisite to magnesium and substrate binding. ATP binds to 2 of the subunits in the homotetramer inducing a closure of these 2 subunits and the release of the C-terminal loop, thereby activating the enzyme. IMP-specific 5'-nucleotidase involved in IMP (inositol monophosphate) degradation. The protein is IMP-specific 5'-nucleotidase 1 (isn1) of Aspergillus fumigatus (strain ATCC MYA-4609 / CBS 101355 / FGSC A1100 / Af293) (Neosartorya fumigata).